We begin with the raw amino-acid sequence, 465 residues long: Cytochrome P450 85A2 (465 aa).

Residues Gly2–Leu22 traverse the membrane as a helical segment. Cys415 is a binding site for heme. Cys462 carries S-farnesyl cysteine lipidation. The short motif at Cys462 to Tyr465 is the Farnesylation CAAX motif element.

Belongs to the cytochrome P450 family. It depends on heme as a cofactor. Post-translationally, isoprenylated (farnesylated); this addition of a 15-carbon farnesyl isoprenoid to the carboxy terminus is required for endoplasmic reticulum localization and essential for the biosynthesis of brassinolide. In terms of tissue distribution, expressed in stems, hypocotyls, leaves, siliques, shoots, and roots, with a higher expression in apical shoots.

It is found in the membrane. Its subcellular location is the endoplasmic reticulum. It carries out the reaction 6-deoxoteasterone + reduced [NADPH--hemoprotein reductase] + O2 = 6alpha-hydroxyteasterone + oxidized [NADPH--hemoprotein reductase] + H2O + H(+). The catalysed reaction is 6alpha-hydroxytyphasterol + reduced [NADPH--hemoprotein reductase] + O2 = teasterone + oxidized [NADPH--hemoprotein reductase] + 2 H2O + H(+). It catalyses the reaction 3-dehydro-6-deoxoteasterone + reduced [NADPH--hemoprotein reductase] + O2 = 3-dehydro-6alpha-hydroxyteasterone + oxidized [NADPH--hemoprotein reductase] + H2O + H(+). The enzyme catalyses 3-dehydro-6alpha-hydroxyteasterone + reduced [NADPH--hemoprotein reductase] + O2 = 3-dehydroteasterone + oxidized [NADPH--hemoprotein reductase] + 2 H2O + H(+). It carries out the reaction 6-deoxotyphasterol + reduced [NADPH--hemoprotein reductase] + O2 = 6alpha-hydroxytyphasterol + oxidized [NADPH--hemoprotein reductase] + H2O + H(+). The catalysed reaction is 6alpha-hydroxytyphasterol + reduced [NADPH--hemoprotein reductase] + O2 = typhasterol + oxidized [NADPH--hemoprotein reductase] + 2 H2O + H(+). It catalyses the reaction 6-deoxocastasterone + reduced [NADPH--hemoprotein reductase] + O2 = 6alpha-hydroxycastasterone + oxidized [NADPH--hemoprotein reductase] + H2O + H(+). The enzyme catalyses 6alpha-hydroxycastasterone + reduced [NADPH--hemoprotein reductase] + O2 = castasterone + oxidized [NADPH--hemoprotein reductase] + 2 H2O + H(+). It carries out the reaction 6-deoxo-28-norteasterone + 2 reduced [NADPH--hemoprotein reductase] + 2 O2 = 28-norteasterone + 2 oxidized [NADPH--hemoprotein reductase] + 3 H2O + 2 H(+). The catalysed reaction is 6-deoxo-28-norteasterone + reduced [NADPH--hemoprotein reductase] + O2 = 6alpha-hydroxy-28-norteasterone + oxidized [NADPH--hemoprotein reductase] + H2O + H(+). It catalyses the reaction 6alpha-hydroxy-28-norteasterone + reduced [NADPH--hemoprotein reductase] + O2 = 28-norteasterone + oxidized [NADPH--hemoprotein reductase] + 2 H2O + H(+). The enzyme catalyses 6-deoxo-28-nortyphasterol + 2 reduced [NADPH--hemoprotein reductase] + 2 O2 = 28-nortyphasterol + 2 oxidized [NADPH--hemoprotein reductase] + 3 H2O + 2 H(+). It carries out the reaction 6-deoxo-28-nortyphasterol + reduced [NADPH--hemoprotein reductase] + O2 = 6alpha-hydroxy-28-nortyphasterol + oxidized [NADPH--hemoprotein reductase] + H2O + H(+). The catalysed reaction is 6alpha-hydroxy-28-nortyphasterol + reduced [NADPH--hemoprotein reductase] + O2 = 28-nortyphasterol + oxidized [NADPH--hemoprotein reductase] + 2 H2O + H(+). It catalyses the reaction 6-deoxo-28-norcastasterone + 2 reduced [NADPH--hemoprotein reductase] + 2 O2 = 28-norcastasterone + 2 oxidized [NADPH--hemoprotein reductase] + 3 H2O + 2 H(+). The enzyme catalyses 6-deoxo-28-norcastasterone + reduced [NADPH--hemoprotein reductase] + O2 = 6alpha-hydroxy-28-norcastasterone + oxidized [NADPH--hemoprotein reductase] + H2O + H(+). It carries out the reaction 6alpha-hydroxy-28-norcastasterone + reduced [NADPH--hemoprotein reductase] + O2 = 28-norcastasterone + oxidized [NADPH--hemoprotein reductase] + 2 H2O + H(+). The catalysed reaction is 3-dehydro-6-deoxo-28-norteasterone + 2 reduced [NADPH--hemoprotein reductase] + 2 O2 = 6-dehydro-28-norteasterone + 2 oxidized [NADPH--hemoprotein reductase] + 3 H2O + 2 H(+). It catalyses the reaction 3-dehydro-6-deoxo-28-norteasterone + reduced [NADPH--hemoprotein reductase] + O2 = 3-dehydro-6alpha-hydroxy-28-norteasterone + oxidized [NADPH--hemoprotein reductase] + H2O + H(+). The enzyme catalyses 3-dehydro-6alpha-hydroxy-28-norteasterone + reduced [NADPH--hemoprotein reductase] + O2 = 6-dehydro-28-norteasterone + oxidized [NADPH--hemoprotein reductase] + 2 H2O + H(+). It carries out the reaction teasterone + reduced [NADPH--hemoprotein reductase] + O2 = 7-oxateasterone + oxidized [NADPH--hemoprotein reductase] + H2O + H(+). The catalysed reaction is castasterone + reduced [NADPH--hemoprotein reductase] + O2 = brassinolide + oxidized [NADPH--hemoprotein reductase] + H2O + H(+). It catalyses the reaction typhasterol + reduced [NADPH--hemoprotein reductase] + O2 = 7-oxatyphasterol + oxidized [NADPH--hemoprotein reductase] + H2O + H(+). The enzyme catalyses 6-deoxocastasterone + 2 reduced [NADPH--hemoprotein reductase] + 2 O2 = castasterone + 2 oxidized [NADPH--hemoprotein reductase] + 3 H2O + 2 H(+). It carries out the reaction 6-deoxoteasterone + 2 reduced [NADPH--hemoprotein reductase] + 2 O2 = teasterone + 2 oxidized [NADPH--hemoprotein reductase] + 3 H2O + 2 H(+). The catalysed reaction is 6-deoxotyphasterol + 2 reduced [NADPH--hemoprotein reductase] + 2 O2 = typhasterol + 2 oxidized [NADPH--hemoprotein reductase] + 3 H2O + 2 H(+). It catalyses the reaction 3-dehydro-6-deoxoteasterone + 2 reduced [NADPH--hemoprotein reductase] + 2 O2 = 3-dehydroteasterone + 2 oxidized [NADPH--hemoprotein reductase] + 3 H2O + 2 H(+). It participates in plant hormone biosynthesis; brassinosteroid biosynthesis. Its function is as follows. Mediates Baeyer-Villiger oxidation and catalyzes the C6-oxidation step and lactonization in brassinosteroids biosynthesis. Converts 6-deoxocastasterone (6-deoxoCS) to castasterone (CS), and castasterone to brassinolide (BL). May also convert 6-deoxoteasterone (6-deoxoTE) to teasterone (TE), 3-dehydro-6-deoxoteasterone (6-deoxo3DT, 6-deoxo-3-DHT) to 3-dehydroteasterone (3DT, 3-DHT), and 6-deoxotyphasterol (6-deoxoTY) to typhasterol (TY). Also seems to be able to convert teasterone (TE) and typhasterol (TY) to 7-oxateasterone (7-OXTE) and 7-oxatyphasterol (7-OXTY), respectively. Catalyzes the conversion of 6-deoxo-28-norteasterone (6-deoxo-28-norTE) to 28-norteasterone (28-norTE), 6-deoxo-28-nordeoxoteasterone (6-deoxo-28-nor-3-DHT) to 28-nordeoxoteasterone (28-nor-3-DHT), 6-deoxo-28-nortyphasterol (6-deoxo-28-norTY) to 28-nortyphasterol (28-norTY) and 6-deoxo-28-norcastasterone (6-deoxo-28-norCS) to 28-norcastasterone (28-norCS). Involved in a negative regulation of responses to abscisic acid (ABA) and drought tolerance. This is Cytochrome P450 85A2 (CYP85A2) from Arabidopsis thaliana (Mouse-ear cress).